A 114-amino-acid polypeptide reads, in one-letter code: uncharacterized protein (114 aa).

An HTH arsR-type domain is found at 2 to 97; it reads ESEPLYKLKA…VARKVLARVL (96 aa). Residues 37–60 constitute a DNA-binding region (H-T-H motif); the sequence is GELLSSDVGLESSNLSQQLGVLRR.

This is an uncharacterized protein from Mycobacterium tuberculosis (strain CDC 1551 / Oshkosh).